Consider the following 152-residue polypeptide: Small ribosomal subunit protein uS15 (152 aa).

Over residues Met-1–Lys-11 the composition is skewed to basic residues. The segment at Met-1–Pro-23 is disordered.

The protein belongs to the universal ribosomal protein uS15 family. In terms of assembly, part of the 30S ribosomal subunit.

The polypeptide is Small ribosomal subunit protein uS15 (Methanosarcina acetivorans (strain ATCC 35395 / DSM 2834 / JCM 12185 / C2A)).